Here is a 156-residue protein sequence, read N- to C-terminus: SsrA-binding protein (156 aa).

The segment at 131–156 is disordered; that stretch reads YDKRQTLREQQDKREALRVMRERNRG.

Belongs to the SmpB family.

The protein resides in the cytoplasm. Its function is as follows. Required for rescue of stalled ribosomes mediated by trans-translation. Binds to transfer-messenger RNA (tmRNA), required for stable association of tmRNA with ribosomes. tmRNA and SmpB together mimic tRNA shape, replacing the anticodon stem-loop with SmpB. tmRNA is encoded by the ssrA gene; the 2 termini fold to resemble tRNA(Ala) and it encodes a 'tag peptide', a short internal open reading frame. During trans-translation Ala-aminoacylated tmRNA acts like a tRNA, entering the A-site of stalled ribosomes, displacing the stalled mRNA. The ribosome then switches to translate the ORF on the tmRNA; the nascent peptide is terminated with the 'tag peptide' encoded by the tmRNA and targeted for degradation. The ribosome is freed to recommence translation, which seems to be the essential function of trans-translation. This chain is SsrA-binding protein, found in Arthrobacter sp. (strain FB24).